Consider the following 467-residue polypeptide: H(+)/Cl(-) exchange transporter ClcA (467 aa).

The Cytoplasmic portion of the chain corresponds to 1–30; sequence MTKRERIVKSVLAHVPKDAINQFVSRGSTP. Residues 31–67 traverse the membrane as a helical segment; sequence FSVLIMAAIVGTLAGFVGTYFELAVHFVSETRTEWLR. Topologically, residues 68 to 74 are periplasmic; it reads SEIGSVL. A helical transmembrane segment spans residues 75-98; sequence PLWLAAVLISALLAFIGYFLVHRF. Positions 104–108 match the Selectivity filter part_1 motif; it reads GSGIP. S105 contributes to the chloride binding site. The helical intramembrane region spans 107 to 114; it reads IPEIEGAM. Residues 115–121 lie on the Cytoplasmic side of the membrane; that stretch reads DNIRPVR. Helical transmembrane passes span 122–139 and 146–164; these read WWRVLPVKFFGGMGALGS and EGPTVQMGGAVGRMVTDIF. The short motif at 144 to 148 is the Selectivity filter part_2 element; it reads GREGP. Over 165 to 174 the chain is Cytoplasmic; it reads RVKDDDTRHS. 2 consecutive intramembrane regions (helical) follow at residues 175–187 and 191–199; these read LLASGAAGGLAAA and PLAGIMFVV. Residues 200–212 lie on the Cytoplasmic side of the membrane; it reads EEMRPQFRYSLIS. A helical membrane pass occupies residues 213 to 230; sequence IRAVIISAIMANIVFRAI. The Periplasmic portion of the chain corresponds to 231 to 250; sequence NGQDAVITMPQYQSPALQTL. A helical transmembrane segment spans residues 251–279; that stretch reads WLFLLLGALFGVFGVIFNKLITVAQDSFV. Topologically, residues 280 to 285 are cytoplasmic; it reads AIHKND. The chain crosses the membrane as a helical span at residues 286–307; that stretch reads RKRYLITGSILGGVFGLLLLYV. Topologically, residues 308–327 are periplasmic; sequence PQLTGGGIALIPDVTTGNYS. Transmembrane regions (helical) follow at residues 328–347 and 353–374; these read ISILVLLFIGRVVTTLLCFG and GIFAPMLALGTLFGYAFGASAD. Residues 353–357 carry the Selectivity filter part_3 motif; the sequence is GIFAP. Chloride-binding residues include I354 and F355. Topologically, residues 375–384 are periplasmic; the sequence is VLLPTLDIEP. The segment at residues 385 to 399 is an intramembrane region (helical); that stretch reads GVFAIAGMGALFAAT. Residues 400–402 constitute an intramembrane region (note=Loop between two helices); it reads VRA. Residues 403-414 constitute an intramembrane region (helical); the sequence is PITGILLVIEMT. Residues 415–419 constitute an intramembrane region (note=Loop between two helices); sequence NNYYL. A helical membrane pass occupies residues 420–436; it reads ILPLIITCLGAVIVAQL. Residues 437–467 lie on the Cytoplasmic side of the membrane; that stretch reads LGGQPIYSQLLHRTLKNDKLRQQDLPENQAS. Y443 lines the chloride pocket.

This sequence belongs to the chloride channel (TC 2.A.49) family. ClcA subfamily. As to quaternary structure, homodimer.

The protein resides in the cell inner membrane. It catalyses the reaction 2 chloride(in) + H(+)(out) = 2 chloride(out) + H(+)(in). Proton-coupled chloride transporter. Functions as antiport system and exchanges two chloride ions for 1 proton. Probably acts as an electrical shunt for an outwardly-directed proton pump that is linked to amino acid decarboxylation, as part of the extreme acid resistance (XAR) response. The chain is H(+)/Cl(-) exchange transporter ClcA from Vibrio parahaemolyticus serotype O3:K6 (strain RIMD 2210633).